Reading from the N-terminus, the 99-residue chain is Malonate decarboxylase acyl carrier protein (99 aa).

Residue Ser-25 is modified to O-(phosphoribosyl dephospho-coenzyme A)serine.

This sequence belongs to the MdcC family. In terms of processing, covalently binds the prosthetic group of malonate decarboxylase.

The protein resides in the cytoplasm. Subunit of malonate decarboxylase, it is an acyl carrier protein to which acetyl and malonyl thioester residues are bound via a 2'-(5''-phosphoribosyl)-3'-dephospho-CoA prosthetic group and turn over during the catalytic mechanism. This chain is Malonate decarboxylase acyl carrier protein, found in Pseudomonas putida (Arthrobacter siderocapsulatus).